The following is a 163-amino-acid chain: Lipoprotein signal peptidase (163 aa).

A run of 3 helical transmembrane segments spans residues 8 to 28 (FFLLGLILTVGIDQAVKYWVM), 61 to 81 (FSHWGLIFLTLIILIFLLWLW), and 93 to 113 (FGFTLIIGGAIGNLIDRICFY). Active-site residues include aspartate 117 and aspartate 136. The chain crosses the membrane as a helical span at residues 128–148 (YFAVFNLADTFITLGVIAIII).

It belongs to the peptidase A8 family.

It is found in the cell inner membrane. It carries out the reaction Release of signal peptides from bacterial membrane prolipoproteins. Hydrolyzes -Xaa-Yaa-Zaa-|-(S,diacylglyceryl)Cys-, in which Xaa is hydrophobic (preferably Leu), and Yaa (Ala or Ser) and Zaa (Gly or Ala) have small, neutral side chains.. The protein operates within protein modification; lipoprotein biosynthesis (signal peptide cleavage). Functionally, this protein specifically catalyzes the removal of signal peptides from prolipoproteins. The sequence is that of Lipoprotein signal peptidase from Bartonella henselae (strain ATCC 49882 / DSM 28221 / CCUG 30454 / Houston 1) (Rochalimaea henselae).